The sequence spans 332 residues: MSTKEKLIDHVMKEEPIGSRNKVTVVGVGMVGMASAVSILLKDLCDELALVDVMEDKLKGEVMDLQHGGLFLKTHKIVGDKDYSVTANSRVVVVTAGARQQEGESRLNLVQRNVNIFKFIIPNIVKYSPNCILMVVSNPVDILTYVAWKLSGFPRHRVIGSGTNLDSARFRHIMGEKLHLHPSSCHGWIVGEHGDSSVPVWSGVNVAGVSLQTLNPKMGAEGDTENWKAVHKMVVDGAYEVIKLKGYTSWAIGMSVADLVESIVKNLHKVHPVSTLVKGMHGVKDEVFLSVPCVLGNSGLTDVIHMTLKPEEEKQLVKSAETLWGVQKELTL.

Residues 29 to 57 (GMVG…MEDK) and arginine 99 each bind NAD(+). Substrate is bound by residues arginine 106, asparagine 138, and arginine 169. Residue asparagine 138 coordinates NAD(+). The active-site Proton acceptor is the histidine 193. Residue threonine 248 participates in substrate binding.

The protein belongs to the LDH/MDH superfamily. LDH family. In terms of assembly, homotetramer.

Its subcellular location is the cytoplasm. The catalysed reaction is (S)-lactate + NAD(+) = pyruvate + NADH + H(+). It functions in the pathway fermentation; pyruvate fermentation to lactate; (S)-lactate from pyruvate: step 1/1. In terms of biological role, interconverts simultaneously and stereospecifically pyruvate and lactate with concomitant interconversion of NADH and NAD(+). The polypeptide is L-lactate dehydrogenase A chain (ldha) (Sphyraena lucasana (Lucas barracuda)).